We begin with the raw amino-acid sequence, 234 residues long: Probable transcriptional regulatory protein MYCGA1330 (234 aa).

Belongs to the TACO1 family.

Its subcellular location is the cytoplasm. The polypeptide is Probable transcriptional regulatory protein MYCGA1330 (Mycoplasmoides gallisepticum (strain R(low / passage 15 / clone 2)) (Mycoplasma gallisepticum)).